The sequence spans 922 residues: Protein translocase subunit SecA (922 aa).

Residues glutamine 87, 105-109 (GEGKT), and aspartate 516 each bind ATP. Residues 867–912 (YTAPTETGEPETLPDPRTAGAGGDGLNLPEGVRIGRNDPCPCGSGK) form a disordered region. 4 residues coordinate Zn(2+): cysteine 906, cysteine 908, cysteine 917, and histidine 918.

Belongs to the SecA family. As to quaternary structure, monomer and homodimer. Part of the essential Sec protein translocation apparatus which comprises SecA, SecYEG and auxiliary proteins SecDF-YajC and YidC. Requires Zn(2+) as cofactor.

The protein resides in the cell inner membrane. Its subcellular location is the cytoplasm. The catalysed reaction is ATP + H2O + cellular proteinSide 1 = ADP + phosphate + cellular proteinSide 2.. Its function is as follows. Part of the Sec protein translocase complex. Interacts with the SecYEG preprotein conducting channel. Has a central role in coupling the hydrolysis of ATP to the transfer of proteins into and across the cell membrane, serving both as a receptor for the preprotein-SecB complex and as an ATP-driven molecular motor driving the stepwise translocation of polypeptide chains across the membrane. In Paracidovorax citrulli (strain AAC00-1) (Acidovorax citrulli), this protein is Protein translocase subunit SecA.